We begin with the raw amino-acid sequence, 1742 residues long: Kinase non-catalytic C-lobe domain-containing protein 1 (1742 aa).

Positions 37-217 (VSLADILSLR…QELSENTWRG (181 aa)) constitute a KIND 1 domain. Disordered regions lie at residues 215–288 (WRGR…EGLA) and 365–455 (FKTQ…TEQS). Phosphoserine is present on Ser267. A compositionally biased stretch (polar residues) spans 403 to 412 (LEASSPSQGS). Residues 426-445 (DSDHEGHIPRSEEKIPEESR) are compositionally biased toward basic and acidic residues. Positions 456 to 620 (LSLKDLLSKL…RASTCKVHPE (165 aa)) constitute a KIND 2 domain. 4 disordered regions span residues 703 to 727 (DQLALPSESNEKPKEGSGHLDREGT), 744 to 876 (SNQL…KMTA), 948 to 1006 (GPAS…LSDI), and 1028 to 1076 (VTRE…ASDF). Residues 711–727 (SNEKPKEGSGHLDREGT) show a composition bias toward basic and acidic residues. Low complexity predominate over residues 755–771 (GATPDPDGDSGSPSSAT). The segment covering 782–791 (VTQQKGTSGT) has biased composition (polar residues). Positions 847-861 (SDGHPEKPRPADRKL) are enriched in basic and acidic residues. Low complexity predominate over residues 949–965 (PASPSESTSEEPGSQPE). Ser951 carries the post-translational modification Phosphoserine. A compositionally biased stretch (polar residues) spans 1043–1053 (GPSQDSTSHAS). The stretch at 1112–1177 (HTELEAQSPE…EMKSKVQFLS (66 aa)) forms a coiled coil. The 129-residue stretch at 1239–1367 (KARILQAGTP…ALLEVGTERR (129 aa)) folds into the N-terminal Ras-GEF domain. One can recognise a Ras-GEF domain in the interval 1461 to 1712 (STNQLFTQLT…SGADVSILAA (252 aa)).

As to quaternary structure, interacts (via KIND2) with MAP2; the interaction enhances MAP2 phosphorylation and localizes KNDC1 to dendrites. In terms of tissue distribution, highly expressed in the brain and at low levels in the ovary. In the brain it is most prominently expressed in the cerebellum where it is restricted to the granular Purkinje cell layer.

Its subcellular location is the cell projection. It is found in the dendrite. The protein resides in the perikaryon. Its function is as follows. RAS-Guanine nucleotide exchange factor (GEF) that controls the negative regulation of neuronal dendrite growth by mediating a signaling pathway linking RAS and MAP2. May be involved in cellular senescence. This Mus musculus (Mouse) protein is Kinase non-catalytic C-lobe domain-containing protein 1.